A 136-amino-acid chain; its full sequence is Large ribosomal subunit protein uL16 (136 aa).

This sequence belongs to the universal ribosomal protein uL16 family. In terms of assembly, part of the 50S ribosomal subunit.

Binds 23S rRNA and is also seen to make contacts with the A and possibly P site tRNAs. The polypeptide is Large ribosomal subunit protein uL16 (Aggregatibacter actinomycetemcomitans (Actinobacillus actinomycetemcomitans)).